The following is a 211-amino-acid chain: Calcipressin-like protein (211 aa).

A phosphoserine mark is found at Ser-113 and Ser-117. Residue Thr-182 is modified to Phosphothreonine.

It belongs to the RCAN family.

In terms of biological role, inhibits calcineurin-dependent transcriptional responses by binding to the catalytic domain of calcineurin. In Saccharomyces cerevisiae (strain ATCC 204508 / S288c) (Baker's yeast), this protein is Calcipressin-like protein (RCN1).